Consider the following 113-residue polypeptide: Kita-kyushu lung cancer antigen 1 (113 aa).

The Cytoplasmic segment spans residues 1-3 (MNF). Residues 4–21 (YLLLASSILCALIVFWKY) traverse the membrane as a helical; Signal-anchor for type II membrane protein segment. Topologically, residues 22 to 113 (RRFQRNTGEM…RGASPHRKST (92 aa)) are extracellular. N83 carries N-linked (GlcNAc...) asparagine glycosylation.

As to expression, specifically expressed in testis. Expressed by cancer cell lines.

It localises to the cell membrane. The protein is Kita-kyushu lung cancer antigen 1 (CT83) of Homo sapiens (Human).